We begin with the raw amino-acid sequence, 96 residues long: Co-chaperonin GroES (96 aa).

It belongs to the GroES chaperonin family. Heptamer of 7 subunits arranged in a ring. Interacts with the chaperonin GroEL.

Its subcellular location is the cytoplasm. In terms of biological role, together with the chaperonin GroEL, plays an essential role in assisting protein folding. The GroEL-GroES system forms a nano-cage that allows encapsulation of the non-native substrate proteins and provides a physical environment optimized to promote and accelerate protein folding. GroES binds to the apical surface of the GroEL ring, thereby capping the opening of the GroEL channel. This chain is Co-chaperonin GroES, found in Leptospira borgpetersenii serovar Hardjo-bovis (strain JB197).